The sequence spans 202 residues: Protein DCV1 (202 aa).

The signal sequence occupies residues 1–18 (MLNYKLILLFSSFLQLIS). A run of 3 helical transmembrane segments spans residues 91-107 (IGGL…LTFI), 137-155 (ILTL…LLCM), and 168-189 (LVWL…FLSF).

The protein localises to the membrane. The polypeptide is Protein DCV1 (DCV1) (Saccharomyces cerevisiae (strain ATCC 204508 / S288c) (Baker's yeast)).